The sequence spans 353 residues: UPF0283 membrane protein KPN78578_12740 (353 aa).

Transmembrane regions (helical) follow at residues 70–90 (MVSA…VQWT), 99–119 (WIAL…VGSL), and 213–233 (ESTL…FIAW).

The protein belongs to the UPF0283 family.

The protein localises to the cell inner membrane. The protein is UPF0283 membrane protein KPN78578_12740 of Klebsiella pneumoniae subsp. pneumoniae (strain ATCC 700721 / MGH 78578).